The primary structure comprises 87 residues: Small ribosomal subunit protein uS17 (87 aa).

This sequence belongs to the universal ribosomal protein uS17 family. As to quaternary structure, part of the 30S ribosomal subunit.

One of the primary rRNA binding proteins, it binds specifically to the 5'-end of 16S ribosomal RNA. This is Small ribosomal subunit protein uS17 from Neisseria gonorrhoeae (strain ATCC 700825 / FA 1090).